Consider the following 2476-residue polypeptide: MLGLPALAGPMAMPHPPLIPSTPTLLAFSFPGGFYMLLDPKNAKPRQRSALLSPLIQSSGCLSLSFQYTQRGQASGATLMVYASVLGSIRKHTLFSGQPGPSWQPVSVNYTSQGQIQFTLVGVFGKIPEPAVAVDAISIAPCEESFPQCDFEDNAHPFCDWVQASQDGGYWRQGNKNTFIQPAGPFGISLNGEGHYIFLETDKFSQAGQSFRLVSRPFCAPAVICVTFTYHMYGLGQGTKLRLLLGSPAGSPPSSLWERVGPQSPEWLNTSVTIPSGHQQPMQLIFEAVRGTNTAFVVALGFVLINHGTCRGPSETSVSTEKPVAPTEKPTVPSEIYTIPTEKPMVHMEKPIVHTEKPTVPTEKPTIPTEKSTVPTKKPTVFKEPTLPPEGPTVPAERPTTPPEGPAVPPKGPTVLTEWPTSHTEKSTVHTEKPILPTGKSTIPTEKPMVPTKRTTTPTERTTIPAEKPTVPIEKPMVPTERTTIPTERTTIPTEKPTVPTEKLTVPTEKPIVPTEKPIVPTEKHTIPTEKLTVLTERTTTPTERTTIPTEKPTVPTEKPSVPTEKPTVPTEEPTIPTEKLTVPTERTTTPTKRTTTPTIRTTTPTIRTTTPTERTTTPTIRTTTPTERTTIPTKKTTVPTEKTIIPTERTIAPTTPQPSPTLVPTQPAAVVMPSTSATTVTPRTTIASCPPNAHFERCACPVSCQSPTPNCELFCKPGCVCDPGFLFSGSHCVNASSCDCFYNDNYYKLGTDWFSPNCTEHCHCRPSSRMECQTFKCGTHTVCQLKNGQYGCHPYGSATCSVYGDPHYLTFDGRRFNFMGKCTYILAQPCGNLTEHFFRVLVKKEERGQEGVSCLSKVYVTLPESTVTLLKGRHTLVGGQRVTLPAIPSRGVFLAPSGRFVELQTAFGLRVRWDGDQQLFVSVPSTFSGKLCGLCGDYDGDSSNDNQKPDGSPAKDEKELGSSWQTSEDADQQCEENQVSPPSCNTALQNTMSGPEFCGQLVAPHGVFEACLPHLRASSFFKSCTFDMCNFQGLQHMLCAHMSALTENCQDAGYTVKPWRGPQFCPLACPRNSRYTLCARLCPDTCHSEFSGRACKDRCVEGCECDPGFVLSGLQCVSRSECGCLDSTAGYVKVGERWFKPGCRQLCICEGNNRTRCVLWRCQAQEFCGQQDGIYGCHAQGSATCTVSGDPHYLTFDGALHHFTGTCTYTLTKPCWLRSLENSFLVSATNEFRGGNLEASYVRAVQVQVFNLRISLIKGRKVTLDGRRVALPLWPAQGRVSITSSGSFILLYTDFGLQVRYDGDHLVEVTVPSSYAGRLCGLCGNYNNNSLDDILQPDKRPASSSVRLGASWKINELSEPGCFAEGGKPPRCLGKEVADAWRKNCDVLMNPQGPFSQCHRVVAPQSSFSSCLYGQCATKGDTLTLCRSLQAYASLCARAGQALTWRNGTFCPLKCPSGSSYSTCANPCPATCLSLNNPSYCPSTLPCAEGCECQKGHILSGTSCVPLSQCGCTTQRGSYHPVGESWYTDNSCSRLCTCSAHNNISCRQASCKPSQMCWPQDGLIRCRVAGMGVCRIPDTSHYVSFDGSYHAVRGNCTYVLVKICHSTMDLPFFKISGENGKREGQPPAFYLRQVYVDIFNTLVTLKQDQVLINGTRVSLPATTQIRGVRVISRDGYTVLTINIGVQVKFDGRGFLEVEIPKAYYGRTCGVCGNFNDEEEDELMMPSDALALDDVMYVDSWRDKEIDPNCQEDDRKTEAESQEQPSANCRPADLERAQEQCQAAFQAPAWANCATRVVLSPYVRSCTHKLCEFGGLNRAFCESLQAFGAACQAQGIKPPVWRNSSFCPLDCSAHSVYTSCVPSCLPSCQDPEGQCTGAGAPSTCEEGCICEPGYVLSEQQCVARSQCGCRDARGTFLPVGRFRLSSGCSQMCVCTAGAIECRPFTCPSGSQCEPNEDGKDFCQPNSSNLCSVFGDPHYRTFDGLSYRFQGRMTYTLVKTLDVLPDGVEPLVVEGRNKVYPSLTPVFLQEIIVMVYGYTVQLQAELELVVNGQKVSIPYKPNEYLQVTLRGRRLYLVTDFELVVSFNGRNNAVIAMPSTYLGLVRGLCGNYDKNKRNDFMLPNGSFTQNLLVFGNSWEVKAKEGHPRFSRAIREEEEKNEESGFQNVSECSPEQLELVNHTQACGVLVDPQGPFAACHQIVAPGPFQEHCVFDLCAAPGPKEQEELRCQVLSGYAIICQESGPTLAGWRDHTHCALPCPANTVYQSCMTPCPASCATLAVPRACDGPCVEGCASLPGYIYSGAQSLPMAHCGCTNNGVYYQQGDSFVTENCSQRCTCASSGVLLCEPLSCRPGEICTLGNLTRGCFRDSPCLQNPCQNDGRCREQGTHFTCECELGYGGDLCTEPRGVPSPKKPEASNRVAILLGMLMPTVLLVPAVTRVSRKRRRRRRPSRERTQSQNRGKRAGTDCAPEQAYKVA.

Residues Met1–Ser29 form the signal peptide. The Extracellular segment spans residues Phe30–Arg2418. MAM domains follow at residues Pro31–Glu144 and Pro147–Gly312. N-linked (GlcNAc...) asparagine glycans are attached at residues Asn109 and Asn269. Disordered regions lie at residues Pro313 to Val332, Pro358 to Thr462, and Glu537 to Ile632. The segment at Ser319–Ile687 is 53 X approximate heptapeptide repeats (mucin-like domain). A compositionally biased stretch (low complexity) spans Pro358 to Thr373. The span at Thr400 to Gly412 shows a compositional bias: pro residues. The span at His423 to Lys433 shows a compositional bias: basic and acidic residues. Residues Pro451–Thr462 show a composition bias toward low complexity. The TIL 1 domain occupies Cys690–Cys739. Residues Asn735, Asn758, and Asn833 are each glycosylated (N-linked (GlcNAc...) asparagine). In terms of domain architecture, VWFC 1 spans Asp740–His794. The VWFD 1 domain maps to Ala799–Glu976. Disulfide bonds link Cys801–Cys936 and Cys823–Cys975. The segment at Ser943–Pro983 is disordered. The TIL 2 domain occupies Cys1070–Cys1123. Positions Gly1124–Ala1180 constitute a VWFC 2 domain. The N-linked (GlcNAc...) asparagine glycan is linked to Asn1154. A VWFD 2 domain is found at Ala1184 to Phe1364. 2 cysteine pairs are disulfide-bonded: Cys1186–Cys1324 and Cys1208–Cys1363. Residues Asn1329 and Asn1448 are each glycosylated (N-linked (GlcNAc...) asparagine). The TIL 3 domain maps to Cys1456–Cys1511. The VWFC 3 domain occupies Gly1512–Arg1568. Residues Asn1544, Asn1596, and Asn1654 are each glycosylated (N-linked (GlcNAc...) asparagine). Residues Gly1573–Gln1751 form the VWFD 3 domain. 2 disulfides stabilise this stretch: Cys1575/Cys1712 and Cys1597/Cys1750. Basic and acidic residues predominate over residues Asp1747–Ala1759. The segment at Asp1747–Asn1768 is disordered. Asn1843 carries N-linked (GlcNAc...) asparagine glycosylation. Residues Cys1851 to Cys1907 form the TIL 4 domain. Residues Gly1908–Gln1963 form the VWFC 4 domain. N-linked (GlcNAc...) asparagine glycosylation is present at Asn1965. Residues Asn1968–Pro2145 enclose the VWFD 4 domain. A disulfide bridge links Cys1970 with Cys2107. N-linked (GlcNAc...) asparagine glycosylation is found at Asn2122, Asn2165, and Asn2178. The region spanning Cys2257–Cys2310 is the TIL 5 domain. Positions Gly2311 to Phe2365 constitute a VWFC 5 domain. 2 N-linked (GlcNAc...) asparagine glycosylation sites follow: Asn2329 and Asn2359. The EGF-like domain maps to Arg2366–Thr2402. Intrachain disulfides connect Cys2370–Cys2381, Cys2375–Cys2390, and Cys2392–Cys2401. The chain crosses the membrane as a helical span at residues Val2419–Val2439. Residues Arg2438–Ala2476 form a disordered region. The span at Val2439 to Ser2450 shows a compositional bias: basic residues. Residues Ser2440–Ala2476 are Cytoplasmic-facing.

In terms of assembly, probably forms covalent oligomers. In terms of processing, the MAM domains and the mucin-like domains are missing from the zonadhesin that binds to the egg extracellular matrix. Processing might occur during sperm maturation and/or capacitation. In terms of tissue distribution, in testis, primarily in haploid spermatids. Not in lung, liver, heart, spleen, brain, kidney, epididymis.

The protein resides in the cell membrane. Binds in a species-specific manner to the zona pellucida of the egg. May be involved in gamete recognition and/or signaling. This chain is Zonadhesin (ZAN), found in Sus scrofa (Pig).